We begin with the raw amino-acid sequence, 317 residues long: Apolipoprotein E (317 aa).

The N-terminal stretch at 1-18 (MKVLWAALLVTFLAGCQA) is a signal peptide. 8 tandem repeats follow at residues 80–101 (ALMD…EQLT), 102–123 (PVAE…ARLG), 124–145 (ADME…AMLG), 146–167 (QSTE…KRLL), 168–189 (RDAD…EGAE), 190–211 (RGVS…VRAA), 212–233 (TVGS…ERLR), and 234–255 (ARME…EQVA). Residues 80–255 (ALMDETMKEL…RLDEVKEQVA (176 aa)) are 8 X 22 AA approximate tandem repeats. M143 is modified (methionine sulfoxide). Phosphoserine is present on S147. An LDL and other lipoprotein receptors binding region spans residues 158-168 (HLRKLRKRLLR). 162 to 165 (LRKR) is a binding site for heparin. The interval 210–290 (AATVGSLAGQ…SWFEPLVEDM (81 aa)) is lipid-binding and lipoprotein association. Residue 229–236 (GERLRARM) coordinates heparin. A homooligomerization region spans residues 266–317 (QQIRLQAEAFQARLKSWFEPLVEDMQRQWAGLVEKVQAAMGTSAAPVPSDNH). Positions 278 to 290 (RLKSWFEPLVEDM) are specificity for association with VLDL.

It belongs to the apolipoprotein A1/A4/E family. In terms of assembly, homotetramer. May interact with ABCA1; functionally associated with ABCA1 in the biogenesis of HDLs. May interact with APP/A4 amyloid-beta peptide; the interaction is extremely stable in vitro but its physiological significance is unclear. May interact with MAPT. May interact with MAP2. In the cerebrospinal fluid, interacts with secreted SORL1. Interacts with PMEL; this allows the loading of PMEL luminal fragment on ILVs to induce fibril nucleation. In terms of processing, APOE exists as multiple glycosylated and sialylated glycoforms within cells and in plasma. The extent of glycosylation and sialylation are tissue and context specific. Glycated in plasma VLDL. Post-translationally, phosphorylated by FAM20C in the extracellular medium.

The protein resides in the secreted. It localises to the extracellular space. The protein localises to the extracellular matrix. It is found in the extracellular vesicle. Its subcellular location is the endosome. The protein resides in the multivesicular body. Functionally, APOE is an apolipoprotein, a protein associating with lipid particles, that mainly functions in lipoprotein-mediated lipid transport between organs via the plasma and interstitial fluids. APOE is a core component of plasma lipoproteins and is involved in their production, conversion and clearance. Apolipoproteins are amphipathic molecules that interact both with lipids of the lipoprotein particle core and the aqueous environment of the plasma. As such, APOE associates with chylomicrons, chylomicron remnants, very low density lipoproteins (VLDL) and intermediate density lipoproteins (IDL) but shows a preferential binding to high-density lipoproteins (HDL). It also binds a wide range of cellular receptors including the LDL receptor/LDLR, the LDL receptor-related proteins LRP1, LRP2 and LRP8 and the very low-density lipoprotein receptor/VLDLR that mediate the cellular uptake of the APOE-containing lipoprotein particles. Finally, APOE also has a heparin-binding activity and binds heparan-sulfate proteoglycans on the surface of cells, a property that supports the capture and the receptor-mediated uptake of APOE-containing lipoproteins by cells. A main function of APOE is to mediate lipoprotein clearance through the uptake of chylomicrons, VLDLs, and HDLs by hepatocytes. APOE is also involved in the biosynthesis by the liver of VLDLs as well as their uptake by peripheral tissues ensuring the delivery of triglycerides and energy storage in muscle, heart and adipose tissues. By participating in the lipoprotein-mediated distribution of lipids among tissues, APOE plays a critical role in plasma and tissues lipid homeostasis. APOE is also involved in two steps of reverse cholesterol transport, the HDLs-mediated transport of cholesterol from peripheral tissues to the liver, and thereby plays an important role in cholesterol homeostasis. First, it is functionally associated with ABCA1 in the biogenesis of HDLs in tissues. Second, it is enriched in circulating HDLs and mediates their uptake by hepatocytes. APOE also plays an important role in lipid transport in the central nervous system, regulating neuron survival and sprouting. The polypeptide is Apolipoprotein E (APOE) (Pan troglodytes (Chimpanzee)).